A 172-amino-acid polypeptide reads, in one-letter code: Shikimate kinase (172 aa).

ATP is bound at residue 14 to 19 (GAGKST). S18 is a Mg(2+) binding site. 3 residues coordinate substrate: D36, R60, and G82. R120 lines the ATP pocket. A substrate-binding site is contributed by R139. Residue Q156 coordinates ATP.

The protein belongs to the shikimate kinase family. As to quaternary structure, monomer. It depends on Mg(2+) as a cofactor.

The protein localises to the cytoplasm. The catalysed reaction is shikimate + ATP = 3-phosphoshikimate + ADP + H(+). It participates in metabolic intermediate biosynthesis; chorismate biosynthesis; chorismate from D-erythrose 4-phosphate and phosphoenolpyruvate: step 5/7. Catalyzes the specific phosphorylation of the 3-hydroxyl group of shikimic acid using ATP as a cosubstrate. This chain is Shikimate kinase, found in Vibrio parahaemolyticus serotype O3:K6 (strain RIMD 2210633).